The primary structure comprises 194 residues: dCTP deaminase (194 aa).

DCTP-binding positions include 110–115 (RSSLAR), Asp128, 136–138 (VLE), Tyr171, Lys178, and Gln182. Glu138 serves as the catalytic Proton donor/acceptor.

It belongs to the dCTP deaminase family. In terms of assembly, homotrimer.

The catalysed reaction is dCTP + H2O + H(+) = dUTP + NH4(+). It participates in pyrimidine metabolism; dUMP biosynthesis; dUMP from dCTP (dUTP route): step 1/2. Its function is as follows. Catalyzes the deamination of dCTP to dUTP. The protein is dCTP deaminase of Glaesserella parasuis serovar 5 (strain SH0165) (Haemophilus parasuis).